Reading from the N-terminus, the 522-residue chain is Sorting nexin-1 (522 aa).

Disordered regions lie at residues 1-89 and 115-142; these read MASG…QDLF and SLPP…QEDQ. A phosphoserine mark is found at Ser-32 and Ser-39. Over residues 35–45 the composition is skewed to acidic residues; it reads EAGDSDTEGED. 2 positions are modified to phosphothreonine: Thr-41 and Thr-48. Ser-58 and Ser-72 each carry phosphoserine. The span at 60–73 shows a compositional bias: polar residues; it reads KRTTSLLPINNGSK. The segment covering 132 to 142 has biased composition (acidic residues); the sequence is EELEEEEQEDQ. Residues 143-272 enclose the PX domain; that stretch reads FDLTVGITDP…EFLEKEELPR (130 aa). The a 1,2-diacyl-sn-glycero-3-phospho-(1D-myo-inositol-3-phosphate) site is built by Arg-186, Ser-188, and Lys-214. Ser-188 carries the post-translational modification Phosphoserine. Position 237 is an N6-acetyllysine (Lys-237). Residue Arg-238 coordinates a 1,2-diacyl-sn-glycero-3-phospho-(1D-myo-inositol-3-phosphate). The residue at position 280 (Ser-280) is a Phosphoserine. Residues 281-298 are membrane-binding amphipathic helix; the sequence is GAGLLKMFNKATDAVSKM. The BAR domain occupies 302–522; it reads MNESDIWFEE…AFLPEAKAIS (221 aa).

The protein belongs to the sorting nexin family. As to quaternary structure, predominantly forms heterodimers with BAR domain-containing sorting nexins SNX5, SNX6 and SNX32; can self-associate to form homodimers. The heterodimers are proposed to self-assemble into helical arrays on the membrane to stabilize and expand local membrane curvature underlying endosomal tubule formation. Thought to be a component of the originally described retromer complex (also called SNX-BAR retromer) which is a pentamer containing the heterotrimeric retromer cargo-selective complex (CSC), also described as vacuolar protein sorting subcomplex (VPS) and a heterodimeric membrane-deforming subcomplex formed between SNX1 or SNX2 and SNX5 or SNX6 (also called SNX-BAR subcomplex); the respective CSC and SNX-BAR subcomplexes associate with low affinity. Interacts with SNX5, SNX6, SNX32, VPS26A, VPS29, VPS35, DRD5, DENND5A, KALRN, RHOG (GDP-bound form). The interaction with SNX2 is reported controversially. Interacts with DNAJC13; prevented by presence of HGS. Interacts with HGS.

Its subcellular location is the endosome membrane. The protein localises to the golgi apparatus. It is found in the trans-Golgi network membrane. The protein resides in the early endosome membrane. It localises to the cell projection. Its subcellular location is the lamellipodium. Functionally, involved in several stages of intracellular trafficking. Interacts with membranes containing phosphatidylinositol 3-phosphate (PtdIns(3P)) or phosphatidylinositol 3,5-bisphosphate (PtdIns(3,5)P2). Acts in part as component of the retromer membrane-deforming SNX-BAR subcomplex. The SNX-BAR retromer mediates retrograde transport of cargo proteins from endosomes to the trans-Golgi network (TGN) and is involved in endosome-to-plasma membrane transport for cargo protein recycling. The SNX-BAR subcomplex functions to deform the donor membrane into a tubular profile called endosome-to-TGN transport carrier (ETC). Can sense membrane curvature and has in vitro vesicle-to-membrane remodeling activity. Involved in retrograde endosome-to-TGN transport of lysosomal enzyme receptors (IGF2R, M6PR and SORT1). Plays a role in targeting ligand-activated EGFR to the lysosomes for degradation after endocytosis from the cell surface and release from the Golgi. Involvement in retromer-independent endocytic trafficking of P2RY1 and lysosomal degradation of protease-activated receptor-1/F2R. Promotes KALRN- and RHOG-dependent but retromer-independent membrane remodeling such as lamellipodium formation; the function is dependent on GEF activity of KALRN. Required for endocytosis of DRD5 upon agonist stimulation but not for basal receptor trafficking. This chain is Sorting nexin-1 (SNX1), found in Macaca fascicularis (Crab-eating macaque).